The sequence spans 499 residues: Trichothecene C-4 hydroxylase (499 aa).

The chain crosses the membrane as a helical span at residues 7-29; that stretch reads VGVAVQLVLTVLLASIPLRVIWN. N-linked (GlcNAc...) asparagine glycosylation is found at Asn-173 and Asn-287. Position 442 (Cys-442) interacts with heme. An N-linked (GlcNAc...) asparagine glycan is attached at Asn-473.

It belongs to the cytochrome P450 family. Requires heme as cofactor.

Its subcellular location is the membrane. The protein operates within sesquiterpene biosynthesis; trichothecene biosynthesis. Its function is as follows. Trichothecene C-4 hydroxylase; part of the gene cluster that mediates the production of the antimicrobial trichothecene harzianum A (HA) that plays a role in Botrytis cinerea antagonistic activity and plant defense priming. The biosynthesis of harzianum A begins with the cyclization of farnesyl diphosphate to trichodiene and is catalyzed by the trichodiene synthase TRI5. Trichodiene undergoes a series of oxygenations catalyzed by the cytochrome P450 monooxygenase TRI4. TRI4 controls the addition of 3 oxygens at C-2, C-11, and the C-12, C-13-epoxide to form the intermediate isotrichodiol. Isotrichodiol then undergoes a non-enzymatic isomerization and cyclization to form 12,13-epoxytrichothec-9-ene (EPT) which is further converted to trichodermol by the cytochrome P450 monooxygenase TRI11 via C-4 hydroxylation. The last step of HA synthesis is esterification of an octatriendioyl moiety to the C-4 oxygen of trichodermol. The octatriendioyl moiety is probably produced by the polyketide synthase TRI17 and the esterification performed by the trichothecene O-acetyltransferase TRI3. In Trichoderma arundinaceum, this protein is Trichothecene C-4 hydroxylase.